The sequence spans 173 residues: Protein FAM180A (173 aa).

Residues 1 to 17 (MHWKMLLLLLLYYNAEA) form the signal peptide.

Belongs to the FAM180 family.

Its subcellular location is the secreted. This chain is Protein FAM180A (FAM180A), found in Homo sapiens (Human).